Reading from the N-terminus, the 517-residue chain is 2,3-bisphosphoglycerate-independent phosphoglycerate mutase (517 aa).

Positions 14 and 64 each coordinate Mn(2+). The Phosphoserine intermediate role is filled by Ser64. Substrate-binding positions include His125, Arg155 to Asp156, Arg187, Arg193, Arg263 to Arg266, and Lys337. Mn(2+) is bound by residues Asp404, His408, Asp445, His446, and His464.

The protein belongs to the BPG-independent phosphoglycerate mutase family. As to quaternary structure, monomer. Mn(2+) is required as a cofactor.

It carries out the reaction (2R)-2-phosphoglycerate = (2R)-3-phosphoglycerate. Its pathway is carbohydrate degradation; glycolysis; pyruvate from D-glyceraldehyde 3-phosphate: step 3/5. Its function is as follows. Catalyzes the interconversion of 2-phosphoglycerate and 3-phosphoglycerate. The sequence is that of 2,3-bisphosphoglycerate-independent phosphoglycerate mutase from Nitrosococcus oceani (strain ATCC 19707 / BCRC 17464 / JCM 30415 / NCIMB 11848 / C-107).